Here is a 200-residue protein sequence, read N- to C-terminus: MARVLVLLSVVVASLLFSQGATFESQRLFNNAVIRVQHLHQLAAKMMDDFEEALLPEERKQLSKIFPLSFCNSDSIEAPAGKDEAQKSSVLKLLHTSYRLIESWEFPSRNLGNPNHISEKLADLKMGIGVLIEGCVDGQTGLDENDSLAPPFEDFYQTLSEGNLRKSFRLLSCFKKDMHKVETYLSVAKCRRSLDSNCTL.

A signal peptide spans 1-22; the sequence is MARVLVLLSVVVASLLFSQGAT. His38 provides a ligand contact to Zn(2+). Cys71 and Cys173 are oxidised to a cystine. Glu182 lines the Zn(2+) pocket. Residues Cys190 and Cys198 are joined by a disulfide bond.

The protein belongs to the somatotropin/prolactin family.

It is found in the secreted. Functionally, growth hormone plays an important role in growth control and is involved in the regulation of several anabolic processes. Implicated as an osmoregulatory substance important for seawater adaptation. The chain is Somatotropin (gh) from Ictalurus punctatus (Channel catfish).